A 164-amino-acid chain; its full sequence is Dehydrin Rab16C (164 aa).

Over residues 42 to 51 the composition is skewed to gly residues; it reads MGGHHAGAGG. The segment at 42–164 is disordered; sequence MGGHHAGAGG…KIKEKLPGQH (123 aa). A compositionally biased stretch (low complexity) spans 105-115; that stretch reads GNNQQQQQMMG. Residues 128-138 show a composition bias toward gly residues; it reads GMTGAGTGTGV. Residues 147-164 are compositionally biased toward basic and acidic residues; it reads GEKKGFMDKIKEKLPGQH.

Belongs to the plant dehydrin family.

The sequence is that of Dehydrin Rab16C (RAB16C) from Oryza sativa subsp. japonica (Rice).